The chain runs to 308 residues: Autophagy-related protein 3 (308 aa).

The segment at 83–159 (NFVETQTTET…NELADDDDDI (77 aa)) is flexible region. The segment at 89 to 121 (TTETRDVGDGWELEGQSEGERESGREDTKSNEE) is disordered. A compositionally biased stretch (basic and acidic residues) spans 106–120 (EGERESGREDTKSNE). Cysteine 235 serves as the catalytic Glycyl thioester intermediate. The segment at 239–283 (NVMKVLMEKVRASRHRARDTEAQKNAEEDWEDLQSDIDDGLRVDQ) is handle region.

The protein belongs to the ATG3 family. Monomer. Interacts with ATG8 through an intermediate thioester bond between Cys-235 and the C-terminal Gly of ATG8. Interacts with the C-terminal region of the E1-like ATG7 enzyme. Also interacts with the ATG12-ATG5 conjugate.

It localises to the cytoplasm. Functionally, E2 conjugating enzyme required for the cytoplasm to vacuole transport (Cvt) and autophagy. Required for selective autophagic degradation of the nucleus (nucleophagy) as well as for mitophagy which contributes to regulate mitochondrial quantity and quality by eliminating the mitochondria to a basal level to fulfill cellular energy requirements and preventing excess ROS production. Responsible for the E2-like covalent binding of phosphatidylethanolamine to the C-terminal Gly of ATG8. The ATG12-ATG5 conjugate plays a role of an E3 and promotes the transfer of ATG8 from ATG3 to phosphatidylethanolamine (PE). This step is required for the membrane association of ATG8. The formation of the ATG8-phosphatidylethanolamine conjugate is essential for autophagy and for the cytoplasm to vacuole transport (Cvt). The ATG8-PE conjugate mediates tethering between adjacent membranes and stimulates membrane hemifusion, leading to expansion of the autophagosomal membrane during autophagy. The polypeptide is Autophagy-related protein 3 (Kluyveromyces marxianus (strain DMKU3-1042 / BCC 29191 / NBRC 104275) (Yeast)).